Here is a 71-residue protein sequence, read N- to C-terminus: Disintegrin ussuristatin-2 (71 aa).

The region spanning 1-71 (EAGEECDCGA…QSADCPRNGF (71 aa)) is the Disintegrin domain. 6 disulfide bridges follow: C6–C21, C8–C16, C15–C38, C29–C35, C34–C59, and C47–C66. The Cell attachment site; atypical (KGD) signature appears at 51-53 (KGD).

The protein belongs to the venom metalloproteinase (M12B) family. P-II subfamily. P-IId sub-subfamily. In terms of assembly, homodimer. In terms of tissue distribution, expressed by the venom gland.

The protein localises to the secreted. In terms of biological role, suppress platelet aggregation induced by ADP, collagen, thrombin, and epinephrine (IC(50)=170-330 nM). Also dose-dependently inhibits the adhesion of human melanoma cells to fibrinogen but not to fibronectin. The protein is Disintegrin ussuristatin-2 of Gloydius ussuriensis (Ussuri mamushi).